Reading from the N-terminus, the 866-residue chain is Translation initiation factor IF-2 (866 aa).

2 disordered regions span residues 1 to 63 and 92 to 257; these read MTND…AAVQ and VVRA…RGRS. Positions 26 to 36 are enriched in polar residues; sequence ETGQVRQSFSH. Basic and acidic residues predominate over residues 92 to 135; the sequence is VVRAAEEAERKRLEEIERRRREEEEARLKVEEEARRKAEEEAAR. Composition is skewed to low complexity over residues 152–164 and 179–197; these read VAPA…AAPQ and PDAS…TEAP. Residues 365 to 533 form the tr-type G domain; sequence SRPPVVTVMG…AILLQSEILD (169 aa). Residues 374-381 form a G1 region; it reads GHVDHGKT. 374–381 contacts GTP; sequence GHVDHGKT. A G2 region spans residues 399 to 403; that stretch reads GITQH. The G3 stretch occupies residues 421 to 424; it reads DTPG. GTP-binding positions include 421–425 and 475–478; these read DTPGH and NKMD. The interval 475 to 478 is G4; sequence NKMD. The interval 511 to 513 is G5; that stretch reads SAK.

This sequence belongs to the TRAFAC class translation factor GTPase superfamily. Classic translation factor GTPase family. IF-2 subfamily.

It localises to the cytoplasm. In terms of biological role, one of the essential components for the initiation of protein synthesis. Protects formylmethionyl-tRNA from spontaneous hydrolysis and promotes its binding to the 30S ribosomal subunits. Also involved in the hydrolysis of GTP during the formation of the 70S ribosomal complex. This Rhodospirillum rubrum (strain ATCC 11170 / ATH 1.1.1 / DSM 467 / LMG 4362 / NCIMB 8255 / S1) protein is Translation initiation factor IF-2.